The primary structure comprises 142 residues: Organic hydroperoxide resistance protein-like 2 (142 aa).

It belongs to the OsmC/Ohr family.

The polypeptide is Organic hydroperoxide resistance protein-like 2 (Staphylococcus saprophyticus subsp. saprophyticus (strain ATCC 15305 / DSM 20229 / NCIMB 8711 / NCTC 7292 / S-41)).